A 194-amino-acid polypeptide reads, in one-letter code: Putative manganese efflux pump MntP (194 aa).

6 consecutive transmembrane segments (helical) span residues 8–28, 36–56, 61–81, 109–129, 138–158, and 172–192; these read LLAI…GIIL, MLIM…LGWL, FSHL…AFLG, MAVA…FLGI, PAGI…IFGI, and LWGG…HLFF.

It belongs to the MntP (TC 9.B.29) family.

The protein localises to the cell inner membrane. Functionally, probably functions as a manganese efflux pump. The polypeptide is Putative manganese efflux pump MntP (Bacteroides fragilis (strain ATCC 25285 / DSM 2151 / CCUG 4856 / JCM 11019 / LMG 10263 / NCTC 9343 / Onslow / VPI 2553 / EN-2)).